Reading from the N-terminus, the 256-residue chain is 2-C-methyl-D-erythritol 4-phosphate cytidylyltransferase (256 aa).

The protein belongs to the IspD/TarI cytidylyltransferase family. IspD subfamily.

The enzyme catalyses 2-C-methyl-D-erythritol 4-phosphate + CTP + H(+) = 4-CDP-2-C-methyl-D-erythritol + diphosphate. Its pathway is isoprenoid biosynthesis; isopentenyl diphosphate biosynthesis via DXP pathway; isopentenyl diphosphate from 1-deoxy-D-xylulose 5-phosphate: step 2/6. Catalyzes the formation of 4-diphosphocytidyl-2-C-methyl-D-erythritol from CTP and 2-C-methyl-D-erythritol 4-phosphate (MEP). In Corynebacterium glutamicum (strain R), this protein is 2-C-methyl-D-erythritol 4-phosphate cytidylyltransferase.